Reading from the N-terminus, the 440-residue chain is MESQQLSQHSPISHGSACASVTSKEVHTNQDPLDVSASKIQEYDKASTKANSQQTTTPASSAVPENPHHASPQTAQSHSPQNGPYQQQCMMTQNQANPSGWSFYGRPSMIPYTPYQMSPMYFPPGPHSQFPQYPSSVGTPLSTPSPESGNTFTDSSSADSDMTSTKKYVRPPPMLTSPNDFLNWVKTYIKFLQNSNLGDIIPTATRKAVRQMTDDELTFLCHTFQLFAPSQFLPTWVKDILSADYTDIMKILSKSINKMQSDTQEVNDITTLATLHYNGSTPADAFEAEVTNILDRLNNNGIPINNKVACQFIMRGLSGEYKFLRYARHRYIHMTVADLFSDIHSMYEEQQESKRNKSTYRRNPSDEKKDSRTYTNTTKPKSITRNSQKPNNSQSRTARAHNVSTSNNSSGPDNDLIRGSTTEPIQLKNKHDLHLRPGTY.

Polar residues-rich tracts occupy residues Met-1–Ser-23, Thr-48–Ser-60, Ser-71–Gln-86, and Pro-131–Phe-152. 3 disordered regions span residues Met-1–Gln-86, Pro-131–Pro-171, and Gln-350–Ile-425. Residues Thr-153–Thr-165 show a composition bias toward low complexity. The segment at Asn-299 to His-401 is RNA-binding. The span at Asn-363–Arg-372 shows a compositional bias: basic and acidic residues. Over residues Thr-373–Pro-412 the composition is skewed to polar residues.

In terms of assembly, homotrimer.

It localises to the cytoplasm. Functionally, capsid protein (CA) is the structural component of the virus-like particle (VLP), forming the shell that encapsulates the retrotransposons dimeric RNA genome. The particles are assembled from trimer-clustered units and there are holes in the capsid shells that allow for the diffusion of macromolecules. CA also has nucleocapsid-like chaperone activity, promoting primer tRNA(i)-Met annealing to the multipartite primer-binding site (PBS), dimerization of Ty1 RNA and initiation of reverse transcription. This is Transposon Ty1-NL1 Gag polyprotein (TY1A-NL1) from Saccharomyces cerevisiae (strain ATCC 204508 / S288c) (Baker's yeast).